A 445-amino-acid polypeptide reads, in one-letter code: MNLNRILQGVNQWLLQTPERSLDEAYHAALKIKEIEDKHFQGRKVANEFSNYGSSTNSYFIAEVKGYLQKIKVRLTEFKASRSIVNTFGPNQPTINNGVITVTTDVCLKKLQFIDSIIGKYQDNYWQEDIQDVPKSIQNRNFEQETAKNKTSRNRSFLAAGSIEDEEIIKSNKSQKATEKPGVLPRSFVNTFNRIKQEIDPQAEESEEAVLKKFRNSRYKTAISLKFILLLIIVPLLTQQLTKTFLITPLVNKYFQQQEQFIFINQDLEEEAFSELRRFEEALHFRGMIGLAPKLSNEEIEGEITKKAAVLSEEFRQRGLNAIANIFADICSLIAFGFVVAFSRREIEIVKSFLDGILYNLSDSAKAFLIILFTDIFVGFHSPHGWEVILEGLSRHFGLPENRQFNFLFIATFPVILDTVLKYWIFRYLNRISPSAVATYRNMNE.

4 helical membrane passes run 227–247 (FILLLIIVPLLTQQLTKTFLI), 322–342 (AIANIFADICSLIAFGFVVAF), 369–389 (LIILFTDIFVGFHSPHGWEVI), and 405–425 (FNFLFIATFPVILDTVLKYWI).

The protein belongs to the CemA family.

Its subcellular location is the cell inner membrane. Required for H(+) efflux immediately after light irradiation to form a rapid H(+) concentration gradient across the thylakoid membranes. Together with PxcL, contributes to transient H(+) uptake following dark to light transition. In Microcystis aeruginosa (strain NIES-843 / IAM M-2473), this protein is Proton extrusion protein PxcA.